The primary structure comprises 58 residues: uncharacterized protein (58 aa).

4Fe-4S ferredoxin-type domains lie at 2 to 27 and 28 to 57; these read GIKILEKCVGCGNCVVFCPRRAIKTY and GVAIVDENKCSNCGICARYCPINAIKVDTS. Residues cysteine 9, cysteine 12, cysteine 15, cysteine 19, cysteine 37, cysteine 40, cysteine 43, and cysteine 47 each contribute to the [4Fe-4S] cluster site.

[4Fe-4S] cluster serves as cofactor.

In terms of biological role, ferredoxins are iron-sulfur proteins that transfer electrons probably in the CO-dehydrogenase complex. This is an uncharacterized protein from Methanocaldococcus jannaschii (strain ATCC 43067 / DSM 2661 / JAL-1 / JCM 10045 / NBRC 100440) (Methanococcus jannaschii).